Here is a 215-residue protein sequence, read N- to C-terminus: Ribose-5-phosphate isomerase A (215 aa).

Substrate is bound by residues 26–29 (TGST), 79–82 (DGAD), and 92–95 (KGGG). Glutamate 101 (proton acceptor) is an active-site residue. Residue lysine 119 participates in substrate binding.

Belongs to the ribose 5-phosphate isomerase family. Homodimer.

It catalyses the reaction aldehydo-D-ribose 5-phosphate = D-ribulose 5-phosphate. Its pathway is carbohydrate degradation; pentose phosphate pathway; D-ribose 5-phosphate from D-ribulose 5-phosphate (non-oxidative stage): step 1/1. Catalyzes the reversible conversion of ribose-5-phosphate to ribulose 5-phosphate. This Stenotrophomonas maltophilia (strain R551-3) protein is Ribose-5-phosphate isomerase A.